The following is a 79-amino-acid chain: uncharacterized protein (79 aa).

Positions 1–33 (MRFIIRTVMLIALVWIGLLLSGYGVLIGSKENA) are cleaved as a signal peptide.

This is an uncharacterized protein from Shigella flexneri.